Here is a 468-residue protein sequence, read N- to C-terminus: 3-isopropylmalate dehydratase large subunit (468 aa).

Cys347, Cys407, and Cys410 together coordinate [4Fe-4S] cluster.

This sequence belongs to the aconitase/IPM isomerase family. LeuC type 1 subfamily. Heterodimer of LeuC and LeuD. It depends on [4Fe-4S] cluster as a cofactor.

The catalysed reaction is (2R,3S)-3-isopropylmalate = (2S)-2-isopropylmalate. It participates in amino-acid biosynthesis; L-leucine biosynthesis; L-leucine from 3-methyl-2-oxobutanoate: step 2/4. Functionally, catalyzes the isomerization between 2-isopropylmalate and 3-isopropylmalate, via the formation of 2-isopropylmaleate. The sequence is that of 3-isopropylmalate dehydratase large subunit from Campylobacter jejuni subsp. jejuni serotype O:23/36 (strain 81-176).